The following is a 320-amino-acid chain: Cytochrome f (320 aa).

A signal peptide spans 1 to 35; it reads MQTRNTFSWIREEITRSISVSLMIYIITWASISSA. Residues Y36, C56, C59, and H60 each contribute to the heme site. The helical transmembrane segment at 286-306 threads the bilayer; it reads VQGLLFFLGSVVLAQIFLVLK.

This sequence belongs to the cytochrome f family. As to quaternary structure, the 4 large subunits of the cytochrome b6-f complex are cytochrome b6, subunit IV (17 kDa polypeptide, petD), cytochrome f and the Rieske protein, while the 4 small subunits are PetG, PetL, PetM and PetN. The complex functions as a dimer. Heme is required as a cofactor.

The protein resides in the plastid. Its subcellular location is the chloroplast thylakoid membrane. In terms of biological role, component of the cytochrome b6-f complex, which mediates electron transfer between photosystem II (PSII) and photosystem I (PSI), cyclic electron flow around PSI, and state transitions. The sequence is that of Cytochrome f from Barbarea verna (Land cress).